The chain runs to 66 residues: UPF0337 protein SAG0606 (66 aa).

A compositionally biased stretch (basic and acidic residues) spans 1-10; the sequence is MSQEKLKSKV. Positions 1–23 are disordered; sequence MSQEKLKSKVEQASGSLKEGAGK.

Belongs to the UPF0337 (CsbD) family.

In Streptococcus agalactiae serotype V (strain ATCC BAA-611 / 2603 V/R), this protein is UPF0337 protein SAG0606.